Reading from the N-terminus, the 363-residue chain is Protein CPn_1058/CP_0792/CPj1058/CpB1100 (363 aa).

An N-terminal signal peptide occupies residues Met-1–Ala-27.

It belongs to the chlamydial CPn_1058/CT_355/TC_0634 family.

This Chlamydia pneumoniae (Chlamydophila pneumoniae) protein is Protein CPn_1058/CP_0792/CPj1058/CpB1100.